Reading from the N-terminus, the 260-residue chain is MYVGYLLDKDTNMYPSPVRHPSLNLNPQNYVPGPPQYSDFASYHHVPGINNDPHHGQPAAAWGSPYTPAKEDWHSYGTAAASAATNPGQFGFSPPDFNPMQPHAGSGLLPPAISSSVPQLSPNAQRRTPYEWMRRSIPSTSSSGKTRTKDKYRVVYTDHQRLELEKEFHYSRYITIRRKAELAAALGLTERQVKIWFQNRRAKERKVNKKKLQQQSQPTSTTTPTPPAVGTPGPMGTLCSGSAPSLVSSSPLTIKEEFMP.

Positions 149–208 (KDKYRVVYTDHQRLELEKEFHYSRYITIRRKAELAAALGLTERQVKIWFQNRRAKERKVN) form a DNA-binding region, homeobox. An interaction with DNA region spans residues 152 to 173 (YRVVYTDHQRLELEKEFHYSRY). The interaction with 5-mCpG DNA stretch occupies residues 191 to 202 (RQVKIWFQNRRA). The tract at residues 204–260 (ERKVNKKKLQQQSQPTSTTTPTPPAVGTPGPMGTLCSGSAPSLVSSSPLTIKEEFMP) is disordered. 2 stretches are compositionally biased toward low complexity: residues 213–223 (QQQSQPTSTTT) and 240–252 (SGSA…SSPL).

The protein belongs to the Caudal homeobox family.

It is found in the nucleus. Functionally, plays a role in transcriptional regulation. Involved in activated KRAS-mediated transcriptional activation of PRKD1. Binds to the PRKD1 promoter. Could play a role in the terminal differentiation of the intestine. Binds preferentially to methylated DNA. This is Homeobox protein CDX-1 (CDX1) from Gallus gallus (Chicken).